The sequence spans 211 residues: RNA chaperone ProQ (211 aa).

The disordered stretch occupies residues 112 to 148 (ERRAVEKANNPKANKKRSVHHSGNKSENKKSAGKKFS). The segment covering 124–134 (ANKKRSVHHSG) has biased composition (basic residues).

It belongs to the ProQ family.

It localises to the cytoplasm. Functionally, RNA chaperone with significant RNA binding, RNA strand exchange and RNA duplexing activities. This Histophilus somni (strain 2336) (Haemophilus somnus) protein is RNA chaperone ProQ.